We begin with the raw amino-acid sequence, 947 residues long: Protein translocase subunit SecA 1 (947 aa).

ATP-binding positions include Gln-83, 101–105 (GEGKT), and Asp-490. Residues 860-947 (AKAQEQTGQG…KTSKPTRRRG (88 aa)) form a disordered region. Basic and acidic residues predominate over residues 925–934 (TRRERREAAR). Residues 935 to 947 (KQAKTSKPTRRRG) are compositionally biased toward basic residues.

This sequence belongs to the SecA family. Monomer and homodimer. Part of the essential Sec protein translocation apparatus which comprises SecA, SecYEG and auxiliary proteins SecDF. Other proteins may also be involved.

The protein localises to the cell membrane. It localises to the cytoplasm. The enzyme catalyses ATP + H2O + cellular proteinSide 1 = ADP + phosphate + cellular proteinSide 2.. In terms of biological role, part of the Sec protein translocase complex. Interacts with the SecYEG preprotein conducting channel. Has a central role in coupling the hydrolysis of ATP to the transfer of proteins into and across the cell membrane, serving as an ATP-driven molecular motor driving the stepwise translocation of polypeptide chains across the membrane. The chain is Protein translocase subunit SecA 1 from Mycobacterium sp. (strain KMS).